The primary structure comprises 126 residues: Phosphoribosyl-AMP cyclohydrolase (126 aa).

D76 provides a ligand contact to Mg(2+). Residue C77 coordinates Zn(2+). Residues D78 and D80 each contribute to the Mg(2+) site. C94 and C101 together coordinate Zn(2+).

It belongs to the PRA-CH family. In terms of assembly, homodimer. Mg(2+) serves as cofactor. Zn(2+) is required as a cofactor.

The protein localises to the cytoplasm. The enzyme catalyses 1-(5-phospho-beta-D-ribosyl)-5'-AMP + H2O = 1-(5-phospho-beta-D-ribosyl)-5-[(5-phospho-beta-D-ribosylamino)methylideneamino]imidazole-4-carboxamide. The protein operates within amino-acid biosynthesis; L-histidine biosynthesis; L-histidine from 5-phospho-alpha-D-ribose 1-diphosphate: step 3/9. In terms of biological role, catalyzes the hydrolysis of the adenine ring of phosphoribosyl-AMP. The protein is Phosphoribosyl-AMP cyclohydrolase of Nitratidesulfovibrio vulgaris (strain ATCC 29579 / DSM 644 / CCUG 34227 / NCIMB 8303 / VKM B-1760 / Hildenborough) (Desulfovibrio vulgaris).